Here is a 398-residue protein sequence, read N- to C-terminus: Dual-specificity RNA methyltransferase RlmN (398 aa).

The active-site Proton acceptor is Glu119. The Radical SAM core domain occupies 125 to 364 (DGDRATLCVS…TIVRKTRGDD (240 aa)). Cys132 and Cys369 are joined by a disulfide. Cys139, Cys143, and Cys146 together coordinate [4Fe-4S] cluster. S-adenosyl-L-methionine-binding positions include 193–194 (GE), Ser225, 247–249 (SLH), and Asn326. Cys369 (S-methylcysteine intermediate) is an active-site residue.

This sequence belongs to the radical SAM superfamily. RlmN family. The cofactor is [4Fe-4S] cluster.

It localises to the cytoplasm. It catalyses the reaction adenosine(2503) in 23S rRNA + 2 reduced [2Fe-2S]-[ferredoxin] + 2 S-adenosyl-L-methionine = 2-methyladenosine(2503) in 23S rRNA + 5'-deoxyadenosine + L-methionine + 2 oxidized [2Fe-2S]-[ferredoxin] + S-adenosyl-L-homocysteine. The enzyme catalyses adenosine(37) in tRNA + 2 reduced [2Fe-2S]-[ferredoxin] + 2 S-adenosyl-L-methionine = 2-methyladenosine(37) in tRNA + 5'-deoxyadenosine + L-methionine + 2 oxidized [2Fe-2S]-[ferredoxin] + S-adenosyl-L-homocysteine. Specifically methylates position 2 of adenine 2503 in 23S rRNA and position 2 of adenine 37 in tRNAs. m2A2503 modification seems to play a crucial role in the proofreading step occurring at the peptidyl transferase center and thus would serve to optimize ribosomal fidelity. The sequence is that of Dual-specificity RNA methyltransferase RlmN from Serratia proteamaculans (strain 568).